We begin with the raw amino-acid sequence, 187 residues long: uncharacterized protein (187 aa).

Residues 139-168 are compositionally biased toward basic and acidic residues; that stretch reads ESKDRKALKNAARKAEKNAHEESSYFRVDD. A disordered region spans residues 139–172; sequence ESKDRKALKNAARKAEKNAHEESSYFRVDDPEPE.

This is an uncharacterized protein from Caenorhabditis elegans.